Reading from the N-terminus, the 546-residue chain is Methionine--tRNA ligase (546 aa).

The 'HIGH' region motif lies at 15–25 (PYANGPIHLGH). Zn(2+) contacts are provided by cysteine 146, cysteine 149, cysteine 159, and cysteine 162. Positions 332 to 336 (KMSKS) match the 'KMSKS' region motif. Lysine 335 serves as a coordination point for ATP.

The protein belongs to the class-I aminoacyl-tRNA synthetase family. MetG type 1 subfamily. As to quaternary structure, monomer. Zn(2+) serves as cofactor.

The protein localises to the cytoplasm. The catalysed reaction is tRNA(Met) + L-methionine + ATP = L-methionyl-tRNA(Met) + AMP + diphosphate. Its function is as follows. Is required not only for elongation of protein synthesis but also for the initiation of all mRNA translation through initiator tRNA(fMet) aminoacylation. The polypeptide is Methionine--tRNA ligase (Coxiella burnetii (strain RSA 331 / Henzerling II)).